The sequence spans 932 residues: Protein translocase subunit SecA (932 aa).

ATP is bound by residues glutamine 86, glycine 104–threonine 108, and aspartate 494. The segment at glutamate 857 to arginine 932 is disordered. Positions threonine 905–proline 915 are enriched in polar residues. Residues lysine 920–arginine 932 show a composition bias toward basic residues.

This sequence belongs to the SecA family. As to quaternary structure, monomer and homodimer. Part of the essential Sec protein translocation apparatus which comprises SecA, SecYEG and auxiliary proteins SecDF. Other proteins may also be involved.

Its subcellular location is the cell membrane. It is found in the cytoplasm. The catalysed reaction is ATP + H2O + cellular proteinSide 1 = ADP + phosphate + cellular proteinSide 2.. Part of the Sec protein translocase complex. Interacts with the SecYEG preprotein conducting channel. Has a central role in coupling the hydrolysis of ATP to the transfer of proteins into and across the cell membrane, serving as an ATP-driven molecular motor driving the stepwise translocation of polypeptide chains across the membrane. The protein is Protein translocase subunit SecA of Renibacterium salmoninarum (strain ATCC 33209 / DSM 20767 / JCM 11484 / NBRC 15589 / NCIMB 2235).